Reading from the N-terminus, the 101-residue chain is Precursor of CEP6 (101 aa).

The N-terminal stretch at 1–26 (MKLSVYIILSILFISTVFYEIQFTEA) is a signal peptide. The propeptide occupies 27–48 (RQLRKTDDQDHDDHHFTVGYTD). Residues 29–42 (LRKTDDQDHDDHHF) show a composition bias toward basic and acidic residues. Residues 29–101 (LRKTDDQDHD…HAVKNNEPNA (73 aa)) form a disordered region. 3 positions are modified to hydroxyproline: P52, P55, and P59. Positions 64–77 (KMKENEENAGGYKD) are excised as a propeptide. Basic and acidic residues predominate over residues 64 to 79 (KMKENEENAGGYKDDF). Hydroxyproline occurs at positions 81, 84, and 88. Positions 93–101 (AVKNNEPNA) are excised as a propeptide.

It belongs to the C-terminally encoded plant signaling peptide (CEP) family. Interacts with CEP receptors (e.g. CEPR1 and CEPR2). Post-translationally, the mature small signaling peptide is generated by proteolytic processing of the longer precursor. In terms of tissue distribution, expressed in lateral root primordia and in lateral roots excluding the meristem region. Also present in the aerial tissues, such as leaf petioles and the shoot apex region.

The protein resides in the secreted. It localises to the extracellular space. The protein localises to the apoplast. Its function is as follows. Extracellular signaling peptide that represses primary root growth rate. Modulates leaf morphology. Regulates systemic nitrogen (N)-demand signaling. Mediates up-regulation of genes involved in N uptake and assimilation pathways. This Arabidopsis thaliana (Mouse-ear cress) protein is Precursor of CEP6.